Reading from the N-terminus, the 194-residue chain is Holliday junction branch migration complex subunit RuvA (194 aa).

The tract at residues 1 to 64 (MIAYIQGSIT…QDAHTLYGFS (64 aa)) is domain I. Positions 65-143 (TIEEKQCFLQ…KVGNMLSLQP (79 aa)) are domain II. Positions 144–150 (SGQEAIY) are flexible linker. The tract at residues 150–194 (YQEALAALSKLGIHKSTAEKTVAAILKEHQGEITVESLIKLALKG) is domain III.

Belongs to the RuvA family. As to quaternary structure, homotetramer. Forms an RuvA(8)-RuvB(12)-Holliday junction (HJ) complex. HJ DNA is sandwiched between 2 RuvA tetramers; dsDNA enters through RuvA and exits via RuvB. An RuvB hexamer assembles on each DNA strand where it exits the tetramer. Each RuvB hexamer is contacted by two RuvA subunits (via domain III) on 2 adjacent RuvB subunits; this complex drives branch migration. In the full resolvosome a probable DNA-RuvA(4)-RuvB(12)-RuvC(2) complex forms which resolves the HJ.

It is found in the cytoplasm. Its function is as follows. The RuvA-RuvB-RuvC complex processes Holliday junction (HJ) DNA during genetic recombination and DNA repair, while the RuvA-RuvB complex plays an important role in the rescue of blocked DNA replication forks via replication fork reversal (RFR). RuvA specifically binds to HJ cruciform DNA, conferring on it an open structure. The RuvB hexamer acts as an ATP-dependent pump, pulling dsDNA into and through the RuvAB complex. HJ branch migration allows RuvC to scan DNA until it finds its consensus sequence, where it cleaves and resolves the cruciform DNA. The protein is Holliday junction branch migration complex subunit RuvA of Amoebophilus asiaticus (strain 5a2).